A 180-amino-acid polypeptide reads, in one-letter code: Lipid droplet coating protein Cap20 (180 aa).

The protein belongs to the perilipin family. In terms of assembly, interacts with class I hydrophobin Hydr1. Interacts also with the cAMP-dependent protein kinase catalytic subunit PkaC1.

Its subcellular location is the lipid droplet. Lipid droplet coating protein that regulates lipid metabolism, appressorial turgor pressure, and virulence. Mature appressoria with high turgor pressure are essential to penetrate the leaf surface. In Colletotrichum siamense (Anthracnose fungus), this protein is Lipid droplet coating protein Cap20.